The primary structure comprises 326 residues: Ficolin-1 (326 aa).

Positions 1–29 (MELSRVAVALGPTGQLLLFLSFQTLAAQA) are cleaved as a signal peptide. Residues 55–93 (GLPGAAGPKGEAGANGPKGERGSPGVVGKAGPAGPKGDR) form the Collagen-like domain. Composition is skewed to low complexity over residues 61–71 (GPKGEAGANGP) and 78–89 (PGVVGKAGPAGP). Residues 61-110 (GPKGEAGANGPKGERGSPGVVGKAGPAGPKGDRGEKGARGEKGEPGQLQS) are disordered. Basic and acidic residues predominate over residues 90–104 (KGDRGEKGARGEKGE). The Fibrinogen C-terminal domain maps to 109–326 (QSCATGPRTC…QVSEMKVRLT (218 aa)). Intrachain disulfides connect Cys111/Cys139 and Cys118/Cys146. The tract at residues 115–154 (PRTCKELLTRGHFLSGWHTIYLPDCQPLTVLCDMDTDGGG) is a domain; contributes to trimerization. The b domain; contributes to trimerization stretch occupies residues 155 to 243 (WTVFQRRSDG…LVLGGFLEGN (89 aa)). Residues Asp262 and Asp264 each contribute to the Ca(2+) site. Asn265 carries an N-linked (GlcNAc...) asparagine glycan. Cys270 and Cys283 are disulfide-bonded. Residue 282 to 284 (ACH) coordinates a carbohydrate. N-linked (GlcNAc...) asparagine glycosylation occurs at Asn313. The p domain stretch occupies residues 317 to 326 (QVSEMKVRLT).

Belongs to the ficolin lectin family. Homotrimer. Interacts with elastin/ELN. Interacts (via Fibrinogen C-terminal domain) with FFAR2. Interacts with CRP; may regulate monocyte activation by FCN1. In terms of tissue distribution, most abundantly expressed in placenta and lung.

Its subcellular location is the secreted. The protein localises to the cell membrane. Extracellular lectin functioning as a pattern-recognition receptor in innate immunity. Binds the sugar moieties of pathogen-associated molecular patterns (PAMPs) displayed on microbes and activates the lectin pathway of the complement system. May also activate monocytes through a G protein-coupled receptor, FFAR2, inducing the secretion of interleukin-8/IL-8. Binds preferentially to 9-O-acetylated 2-6-linked sialic acid derivatives and to various glycans containing sialic acid engaged in a 2-3 linkage. The sequence is that of Ficolin-1 (FCN1) from Sus scrofa (Pig).